The chain runs to 749 residues: Formate acetyltransferase (749 aa).

A PFL domain is found at 3–619; sequence ETNKNHATAW…KTGNTPDGRK (617 aa). Cys-413 acts as the S-acetylcysteine intermediate in catalysis. Cys-414 acts as the Cysteine radical intermediate in catalysis. A Glycine radical domain is found at 626-749; sequence PGANPMHGRD…VISRTFHESM (124 aa). A Glycine radical modification is found at Gly-724.

This sequence belongs to the glycyl radical enzyme (GRE) family. PFL subfamily. In terms of assembly, homodimer.

It localises to the cytoplasm. The catalysed reaction is formate + acetyl-CoA = pyruvate + CoA. It functions in the pathway fermentation; pyruvate fermentation; formate from pyruvate: step 1/1. In terms of biological role, catalyzes the conversion of pyruvate to formate and acetyl-CoA. In Staphylococcus aureus (strain USA300), this protein is Formate acetyltransferase (pflB).